Here is a 248-residue protein sequence, read N- to C-terminus: Triosephosphate isomerase (248 aa).

Asn-10 and Lys-12 together coordinate substrate. His-95 serves as the catalytic Electrophile. Glu-165 functions as the Proton acceptor in the catalytic mechanism.

This sequence belongs to the triosephosphate isomerase family. Homodimer.

The catalysed reaction is D-glyceraldehyde 3-phosphate = dihydroxyacetone phosphate. The protein operates within carbohydrate biosynthesis; gluconeogenesis. It participates in carbohydrate degradation; glycolysis; D-glyceraldehyde 3-phosphate from glycerone phosphate: step 1/1. The chain is Triosephosphate isomerase (TPI1) from Kluyveromyces marxianus (Yeast).